Reading from the N-terminus, the 660-residue chain is DNA primase (660 aa).

The CHC2-type zinc finger occupies cysteine 40–cysteine 64. The disordered stretch occupies residues glycine 94–proline 115. Positions valine 97–glutamine 110 are enriched in basic and acidic residues. In terms of domain architecture, Toprim spans aspartate 261–proline 343. Mg(2+) is bound by residues glutamate 267, aspartate 311, and aspartate 313. Disordered regions lie at residues aspartate 425–tyrosine 449 and glutamine 476–glutamate 519. Over residues glutamine 428–methionine 442 the composition is skewed to polar residues. The segment covering proline 488 to arginine 498 has biased composition (basic and acidic residues).

The protein belongs to the DnaG primase family. As to quaternary structure, monomer. Interacts with DnaB. The cofactor is Zn(2+). Mg(2+) is required as a cofactor.

It carries out the reaction ssDNA + n NTP = ssDNA/pppN(pN)n-1 hybrid + (n-1) diphosphate.. Its function is as follows. RNA polymerase that catalyzes the synthesis of short RNA molecules used as primers for DNA polymerase during DNA replication. In Pseudomonas putida (strain ATCC 47054 / DSM 6125 / CFBP 8728 / NCIMB 11950 / KT2440), this protein is DNA primase.